The sequence spans 260 residues: CD27 antigen (260 aa).

The first 19 residues, 1–19 (MARPHPWWLCVLGTLVGLS), serve as a signal peptide directing secretion. Residues 20 to 191 (ATPAPKSCPE…RSLCSSDFIR (172 aa)) lie on the Extracellular side of the membrane. 3 TNFR-Cys repeats span residues 26–63 (SCPERHYWAQGKLCCQMCEPGTFLVKDCDQHRKAAQCD), 64–104 (PCIP…NAEC), and 105–141 (ACRNGWQCRDKECTECDPLPNPSLTARSSQALSPHPQ). 8 disulfide bridges follow: cysteine 27-cysteine 39, cysteine 40-cysteine 53, cysteine 43-cysteine 62, cysteine 65-cysteine 81, cysteine 84-cysteine 96, cysteine 87-cysteine 104, cysteine 106-cysteine 120, and cysteine 112-cysteine 117. N-linked (GlcNAc...) asparagine glycosylation occurs at asparagine 95. Residue serine 127 is glycosylated (O-linked (GalNAc...) serine). Residues 192–212 (ILVIFSGMFLVFTLAGALFLH) traverse the membrane as a helical segment. Over 213–260 (QRRKYRSNKGESPVEPAEPCHYSCPREEEGSTIPIQEDYRKPEPACSP) the chain is Cytoplasmic. Serine 219 carries the post-translational modification Phosphoserine. The segment at 219–260 (SNKGESPVEPAEPCHYSCPREEEGSTIPIQEDYRKPEPACSP) is disordered. Over residues 249 to 260 (EDYRKPEPACSP) the composition is skewed to basic and acidic residues.

In terms of assembly, homodimer. Interacts with SIVA1; may play a role in apoptosis through association with SIVA1. Interacts with TRAF2. Interacts ith PTPN6. Phosphorylated. In terms of processing, N-glycosylated. Post-translationally, O-glycosylated with core 1 or possibly core 8 glycans. Found in most T-lymphocytes.

The protein resides in the cell membrane. Its function is as follows. Costimulatory immune-checkpoint receptor expressed at the surface of T-cells, NK-cells and B-cells which binds to and is activated by its ligand CD70/CD27L expressed by B-cells. The CD70-CD27 signaling pathway mediates antigen-specific T-cell activation and expansion which in turn provides immune surveillance of B-cells. Mechanistically, CD70 ligation activates the TRAF2-PTPN6 axis that subsequently inhibits LCK phosphorylation to promote phenotypic and transcriptional adaptations of T-cell memory. In addition, activation by CD70 on early progenitor cells provides a negative feedback signal to leukocyte differentiation during immune activation and thus modulates hematopoiesis. Negatively regulates the function of Th2 lymphocytes in the adipose tissue. The sequence is that of CD27 antigen from Homo sapiens (Human).